Consider the following 40-residue polypeptide: Large ribosomal subunit protein bL36B (40 aa).

It belongs to the bacterial ribosomal protein bL36 family.

This chain is Large ribosomal subunit protein bL36B, found in Streptomyces coelicolor (strain ATCC BAA-471 / A3(2) / M145).